Here is a 460-residue protein sequence, read N- to C-terminus: ATP synthase subunit beta (460 aa).

Position 150 to 157 (150 to 157 (GGAGVGKT)) interacts with ATP.

The protein belongs to the ATPase alpha/beta chains family. In terms of assembly, F-type ATPases have 2 components, CF(1) - the catalytic core - and CF(0) - the membrane proton channel. CF(1) has five subunits: alpha(3), beta(3), gamma(1), delta(1), epsilon(1). CF(0) has three main subunits: a(1), b(2) and c(9-12). The alpha and beta chains form an alternating ring which encloses part of the gamma chain. CF(1) is attached to CF(0) by a central stalk formed by the gamma and epsilon chains, while a peripheral stalk is formed by the delta and b chains.

The protein localises to the cell inner membrane. The catalysed reaction is ATP + H2O + 4 H(+)(in) = ADP + phosphate + 5 H(+)(out). Produces ATP from ADP in the presence of a proton gradient across the membrane. The catalytic sites are hosted primarily by the beta subunits. The sequence is that of ATP synthase subunit beta from Shigella dysenteriae serotype 1 (strain Sd197).